Reading from the N-terminus, the 244-residue chain is Ribosome-inactivating protein cucurmosin (244 aa).

Catalysis depends on residues tyrosine 70, tyrosine 109, glutamate 158, and arginine 161. N-linked (GlcNAc...) asparagine glycans are attached at residues asparagine 189 and asparagine 225.

It belongs to the ribosome-inactivating protein family. Type 1 RIP subfamily. The N-linked glycan consists of GlcNAc2Man3Xyl.

It catalyses the reaction Endohydrolysis of the N-glycosidic bond at one specific adenosine on the 28S rRNA.. Has cytotoxic activity towards cancer cells, but not normal cells. Inhibits the growth of the human leukemia cell line K562, the murine melanoma cell line B16 and the lung adenocarcinoma cell line A549 with IC(50) values of 88.1 nM, 63.4 nM and 359.3 nM respectively. This is Ribosome-inactivating protein cucurmosin from Cucurbita moschata (Winter crookneck squash).